We begin with the raw amino-acid sequence, 215 residues long: Guanylate kinase (215 aa).

The Guanylate kinase-like domain maps to 9–187 (GTLYIVSAPS…ALDELSCLVH (179 aa)). 16–23 (APSGAGKT) lines the ATP pocket.

Belongs to the guanylate kinase family.

It localises to the cytoplasm. The catalysed reaction is GMP + ATP = GDP + ADP. In terms of biological role, essential for recycling GMP and indirectly, cGMP. In Chromohalobacter salexigens (strain ATCC BAA-138 / DSM 3043 / CIP 106854 / NCIMB 13768 / 1H11), this protein is Guanylate kinase.